The chain runs to 442 residues: Glutamyl-tRNA(Gln) amidotransferase subunit D (442 aa).

The tract at residues 63–84 is disordered; it reads TQTDIGSSAGAGADTEADKTES. The Asparaginase/glutaminase domain maps to 102 to 429; the sequence is PTVSLISTGG…PDPTNAMRKS (328 aa). Active-site residues include T112, T188, D189, and K265.

Belongs to the asparaginase 1 family. GatD subfamily. In terms of assembly, heterodimer of GatD and GatE.

It catalyses the reaction L-glutamyl-tRNA(Gln) + L-glutamine + ATP + H2O = L-glutaminyl-tRNA(Gln) + L-glutamate + ADP + phosphate + H(+). Functionally, allows the formation of correctly charged Gln-tRNA(Gln) through the transamidation of misacylated Glu-tRNA(Gln) in organisms which lack glutaminyl-tRNA synthetase. The reaction takes place in the presence of glutamine and ATP through an activated gamma-phospho-Glu-tRNA(Gln). The GatDE system is specific for glutamate and does not act on aspartate. The protein is Glutamyl-tRNA(Gln) amidotransferase subunit D of Haloquadratum walsbyi (strain DSM 16790 / HBSQ001).